The chain runs to 321 residues: Acetylglutamate kinase (321 aa).

Residues 88-89 (GG), Arg110, and Asn216 each bind substrate.

Belongs to the acetylglutamate kinase family. ArgB subfamily.

The protein localises to the cytoplasm. It carries out the reaction N-acetyl-L-glutamate + ATP = N-acetyl-L-glutamyl 5-phosphate + ADP. Its pathway is amino-acid biosynthesis; L-arginine biosynthesis; N(2)-acetyl-L-ornithine from L-glutamate: step 2/4. Functionally, catalyzes the ATP-dependent phosphorylation of N-acetyl-L-glutamate. In Ehrlichia chaffeensis (strain ATCC CRL-10679 / Arkansas), this protein is Acetylglutamate kinase.